A 127-amino-acid polypeptide reads, in one-letter code: Holo-[acyl-carrier-protein] synthase (127 aa).

Residues D9 and E58 each contribute to the Mg(2+) site.

It belongs to the P-Pant transferase superfamily. AcpS family. Requires Mg(2+) as cofactor.

The protein localises to the cytoplasm. It carries out the reaction apo-[ACP] + CoA = holo-[ACP] + adenosine 3',5'-bisphosphate + H(+). Functionally, transfers the 4'-phosphopantetheine moiety from coenzyme A to a Ser of acyl-carrier-protein. This is Holo-[acyl-carrier-protein] synthase from Shewanella baltica (strain OS223).